Reading from the N-terminus, the 152-residue chain is Protein-export protein SecB (152 aa).

The protein belongs to the SecB family. In terms of assembly, homotetramer, a dimer of dimers. One homotetramer interacts with 1 SecA dimer.

It localises to the cytoplasm. In terms of biological role, one of the proteins required for the normal export of preproteins out of the cell cytoplasm. It is a molecular chaperone that binds to a subset of precursor proteins, maintaining them in a translocation-competent state. It also specifically binds to its receptor SecA. This Thiobacillus denitrificans (strain ATCC 25259 / T1) protein is Protein-export protein SecB.